Here is a 352-residue protein sequence, read N- to C-terminus: UDP-N-acetylglucosamine--N-acetylmuramyl-(pentapeptide) pyrophosphoryl-undecaprenol N-acetylglucosamine transferase (352 aa).

UDP-N-acetyl-alpha-D-glucosamine is bound by residues 14 to 16 (TGG), N124, R164, S185, and Q285.

The protein belongs to the glycosyltransferase 28 family. MurG subfamily.

The protein resides in the cell inner membrane. The catalysed reaction is di-trans,octa-cis-undecaprenyl diphospho-N-acetyl-alpha-D-muramoyl-L-alanyl-D-glutamyl-meso-2,6-diaminopimeloyl-D-alanyl-D-alanine + UDP-N-acetyl-alpha-D-glucosamine = di-trans,octa-cis-undecaprenyl diphospho-[N-acetyl-alpha-D-glucosaminyl-(1-&gt;4)]-N-acetyl-alpha-D-muramoyl-L-alanyl-D-glutamyl-meso-2,6-diaminopimeloyl-D-alanyl-D-alanine + UDP + H(+). It functions in the pathway cell wall biogenesis; peptidoglycan biosynthesis. Cell wall formation. Catalyzes the transfer of a GlcNAc subunit on undecaprenyl-pyrophosphoryl-MurNAc-pentapeptide (lipid intermediate I) to form undecaprenyl-pyrophosphoryl-MurNAc-(pentapeptide)GlcNAc (lipid intermediate II). The protein is UDP-N-acetylglucosamine--N-acetylmuramyl-(pentapeptide) pyrophosphoryl-undecaprenol N-acetylglucosamine transferase of Chlamydia trachomatis serovar A (strain ATCC VR-571B / DSM 19440 / HAR-13).